The primary structure comprises 98 residues: Large ribosomal subunit protein uL23 (98 aa).

It belongs to the universal ribosomal protein uL23 family. Part of the 50S ribosomal subunit. Contacts protein L29, and trigger factor when it is bound to the ribosome.

Functionally, one of the early assembly proteins it binds 23S rRNA. One of the proteins that surrounds the polypeptide exit tunnel on the outside of the ribosome. Forms the main docking site for trigger factor binding to the ribosome. The polypeptide is Large ribosomal subunit protein uL23 (Gluconacetobacter diazotrophicus (strain ATCC 49037 / DSM 5601 / CCUG 37298 / CIP 103539 / LMG 7603 / PAl5)).